Here is a 267-residue protein sequence, read N- to C-terminus: Phosphatidylglycerol--prolipoprotein diacylglyceryl transferase (267 aa).

3 helical membrane passes run 18–38 (LSVR…MWFA), 57–77 (FLFY…VLFY), and 95–115 (GGMS…IFAW). Arginine 140 contributes to the a 1,2-diacyl-sn-glycero-3-phospho-(1'-sn-glycerol) binding site. 3 helical membrane-spanning segments follow: residues 173 to 193 (SQLY…QWFI), 200 to 220 (GSVA…IEYF), and 233 to 253 (FISM…GLLI).

This sequence belongs to the Lgt family.

Its subcellular location is the cell inner membrane. The enzyme catalyses L-cysteinyl-[prolipoprotein] + a 1,2-diacyl-sn-glycero-3-phospho-(1'-sn-glycerol) = an S-1,2-diacyl-sn-glyceryl-L-cysteinyl-[prolipoprotein] + sn-glycerol 1-phosphate + H(+). It functions in the pathway protein modification; lipoprotein biosynthesis (diacylglyceryl transfer). Its function is as follows. Catalyzes the transfer of the diacylglyceryl group from phosphatidylglycerol to the sulfhydryl group of the N-terminal cysteine of a prolipoprotein, the first step in the formation of mature lipoproteins. This Pseudoalteromonas translucida (strain TAC 125) protein is Phosphatidylglycerol--prolipoprotein diacylglyceryl transferase.